Here is a 67-residue protein sequence, read N- to C-terminus: ATP synthase F(0) complex subunit 8 (67 aa).

A helical transmembrane segment spans residues 8–24 (TWFTTILATITTLFILF). The residue at position 54 (K54) is an N6-acetyllysine; alternate. K54 is subject to N6-succinyllysine; alternate. Position 57 is an N6-acetyllysine (K57).

This sequence belongs to the ATPase protein 8 family. In terms of assembly, component of the ATP synthase complex composed at least of ATP5F1A/subunit alpha, ATP5F1B/subunit beta, ATP5MC1/subunit c (homooctomer), MT-ATP6/subunit a, MT-ATP8/subunit 8, ATP5ME/subunit e, ATP5MF/subunit f, ATP5MG/subunit g, ATP5MK/subunit k, ATP5MJ/subunit j, ATP5F1C/subunit gamma, ATP5F1D/subunit delta, ATP5F1E/subunit epsilon, ATP5PF/subunit F6, ATP5PB/subunit b, ATP5PD/subunit d, ATP5PO/subunit OSCP. ATP synthase complex consists of a soluble F(1) head domain (subunits alpha(3) and beta(3)) - the catalytic core - and a membrane F(0) domain - the membrane proton channel (subunits c, a, 8, e, f, g, k and j). These two domains are linked by a central stalk (subunits gamma, delta, and epsilon) rotating inside the F1 region and a stationary peripheral stalk (subunits F6, b, d, and OSCP). Interacts with PRICKLE3.

It localises to the mitochondrion membrane. Subunit 8, of the mitochondrial membrane ATP synthase complex (F(1)F(0) ATP synthase or Complex V) that produces ATP from ADP in the presence of a proton gradient across the membrane which is generated by electron transport complexes of the respiratory chain. ATP synthase complex consist of a soluble F(1) head domain - the catalytic core - and a membrane F(1) domain - the membrane proton channel. These two domains are linked by a central stalk rotating inside the F(1) region and a stationary peripheral stalk. During catalysis, ATP synthesis in the catalytic domain of F(1) is coupled via a rotary mechanism of the central stalk subunits to proton translocation. In vivo, can only synthesize ATP although its ATP hydrolase activity can be activated artificially in vitro. Part of the complex F(0) domain. In Talpa europaea (European mole), this protein is ATP synthase F(0) complex subunit 8.